A 541-amino-acid polypeptide reads, in one-letter code: Chaperonin GroEL (541 aa).

ATP is bound by residues 29–32, 86–90, Gly413, 476–478, and Asp492; these read TLGP, DGTTT, and NAA.

The protein belongs to the chaperonin (HSP60) family. In terms of assembly, forms a cylinder of 14 subunits composed of two heptameric rings stacked back-to-back. Interacts with the co-chaperonin GroES.

It localises to the cytoplasm. The enzyme catalyses ATP + H2O + a folded polypeptide = ADP + phosphate + an unfolded polypeptide.. Functionally, together with its co-chaperonin GroES, plays an essential role in assisting protein folding. The GroEL-GroES system forms a nano-cage that allows encapsulation of the non-native substrate proteins and provides a physical environment optimized to promote and accelerate protein folding. In Streptococcus equi subsp. zooepidemicus (strain MGCS10565), this protein is Chaperonin GroEL.